A 593-amino-acid chain; its full sequence is NADH-quinone oxidoreductase subunit C/D (593 aa).

An NADH dehydrogenase I subunit C region spans residues 1-184; sequence MTADNALYIP…DPYSLTLAKQ (184 aa). An NADH dehydrogenase I subunit D region spans residues 208 to 593; sequence DYMFLNLGPN…IDFVMADVDR (386 aa).

It in the N-terminal section; belongs to the complex I 30 kDa subunit family. In the C-terminal section; belongs to the complex I 49 kDa subunit family. NDH-1 is composed of 13 different subunits. Subunits NuoB, CD, E, F, and G constitute the peripheral sector of the complex.

Its subcellular location is the cell inner membrane. It catalyses the reaction a quinone + NADH + 5 H(+)(in) = a quinol + NAD(+) + 4 H(+)(out). Its function is as follows. NDH-1 shuttles electrons from NADH, via FMN and iron-sulfur (Fe-S) centers, to quinones in the respiratory chain. The immediate electron acceptor for the enzyme in this species is believed to be ubiquinone. Couples the redox reaction to proton translocation (for every two electrons transferred, four hydrogen ions are translocated across the cytoplasmic membrane), and thus conserves the redox energy in a proton gradient. This is NADH-quinone oxidoreductase subunit C/D from Pseudomonas savastanoi pv. phaseolicola (strain 1448A / Race 6) (Pseudomonas syringae pv. phaseolicola (strain 1448A / Race 6)).